We begin with the raw amino-acid sequence, 791 residues long: Disintegrin and metalloproteinase domain-containing protein 1a (791 aa).

An N-terminal signal peptide occupies residues 1 to 65; it reads MSVAAAGRGF…LLIFLPSTFC (65 aa). Residue N72 is glycosylated (N-linked (GlcNAc...) asparagine). Residues 201–220 form a disordered region; sequence CSVTPKDSPGDTSHPPRSRK. The Peptidase M12B domain occupies 235 to 429; it reads KYVEMFVVVN…HRGACLLDEP (195 aa). N-linked (GlcNAc...) asparagine glycosylation occurs at N256. 3 disulfides stabilise this stretch: C345/C424, C385/C408, and C387/C393. H370 lines the Zn(2+) pocket. E371 is an active-site residue. Zn(2+) is bound by residues H374 and H380. N407 and N484 each carry an N-linked (GlcNAc...) asparagine glycan. Positions 438-522 constitute a Disintegrin domain; the sequence is AANCGNGVVE…ECPANSYMQD (85 aa). C494 and C514 are joined by a disulfide. The N-linked (GlcNAc...) asparagine glycan is linked to N630. In terms of domain architecture, EGF-like spans 663–697; it reads LQYNCEPQEMCHGNGVCNNFKHCHCDAGFAPPDCS. Cystine bridges form between C667/C679, C673/C685, and C687/C696. The chain crosses the membrane as a helical span at residues 741–761; sequence VMVLVVPIFLVVLLCCLMLIA. The Cytoplasmic portion of the chain corresponds to 762 to 791; that stretch reads YLWSEVQEVVSPPSSSESSSSSSWSDSDSQ. Positions 772–791 are disordered; that stretch reads SPPSSSESSSSSSWSDSDSQ.

In terms of assembly, heterodimer with ADAM2/fertilin subunit beta. As to expression, testis.

The protein resides in the membrane. In terms of biological role, may be involved in sperm-egg fusion. The sequence is that of Disintegrin and metalloproteinase domain-containing protein 1a (Adam1a) from Mus musculus (Mouse).